A 159-amino-acid polypeptide reads, in one-letter code: Putative 4-hydroxy-4-methyl-2-oxoglutarate aldolase (159 aa).

Residues 75 to 78 (GDQL) and Arg-97 contribute to the substrate site. Asp-98 lines the a divalent metal cation pocket.

It belongs to the class II aldolase/RraA-like family. In terms of assembly, homotrimer. Requires a divalent metal cation as cofactor.

The catalysed reaction is 4-hydroxy-4-methyl-2-oxoglutarate = 2 pyruvate. It catalyses the reaction oxaloacetate + H(+) = pyruvate + CO2. In terms of biological role, catalyzes the aldol cleavage of 4-hydroxy-4-methyl-2-oxoglutarate (HMG) into 2 molecules of pyruvate. Also contains a secondary oxaloacetate (OAA) decarboxylase activity due to the common pyruvate enolate transition state formed following C-C bond cleavage in the retro-aldol and decarboxylation reactions. The sequence is that of Putative 4-hydroxy-4-methyl-2-oxoglutarate aldolase from Laribacter hongkongensis (strain HLHK9).